Here is a 256-residue protein sequence, read N- to C-terminus: 1-(5-phosphoribosyl)-5-[(5-phosphoribosylamino)methylideneamino] imidazole-4-carboxamide isomerase (256 aa).

The active-site Proton acceptor is the D8. Residue D130 is the Proton donor of the active site.

It belongs to the HisA/HisF family.

The protein localises to the cytoplasm. It catalyses the reaction 1-(5-phospho-beta-D-ribosyl)-5-[(5-phospho-beta-D-ribosylamino)methylideneamino]imidazole-4-carboxamide = 5-[(5-phospho-1-deoxy-D-ribulos-1-ylimino)methylamino]-1-(5-phospho-beta-D-ribosyl)imidazole-4-carboxamide. It functions in the pathway amino-acid biosynthesis; L-histidine biosynthesis; L-histidine from 5-phospho-alpha-D-ribose 1-diphosphate: step 4/9. The sequence is that of 1-(5-phosphoribosyl)-5-[(5-phosphoribosylamino)methylideneamino] imidazole-4-carboxamide isomerase from Pelodictyon phaeoclathratiforme (strain DSM 5477 / BU-1).